Reading from the N-terminus, the 151-residue chain is MYPAHLLVLLAVCVSLLGAASIPARPLNLYQFGNMIQCANHGRRPTWHYMDYGCYCGKGGSGTPVDELDRCCQTHDDCYGEAEKLPACNYMMSGPYYNTYSYECNDGELTCKDNNDECKAFICNCDRTAAICFARTPYNDANWNINTKTSC.

A signal peptide spans 1-27; the sequence is MYPAHLLVLLAVCVSLLGAASIPARPL. 7 disulfides stabilise this stretch: C38/C104, C54/C151, C56/C72, C71/C132, C78/C125, C88/C118, and C111/C123. Residues Y55, G57, and G59 each coordinate Ca(2+). H75 is a catalytic residue. D76 contributes to the Ca(2+) binding site. Residue D126 is part of the active site.

It belongs to the phospholipase A2 family. Group I subfamily. D49 sub-subfamily. Ca(2+) serves as cofactor. In terms of tissue distribution, expressed by the venom gland.

Its subcellular location is the secreted. The catalysed reaction is a 1,2-diacyl-sn-glycero-3-phosphocholine + H2O = a 1-acyl-sn-glycero-3-phosphocholine + a fatty acid + H(+). PLA2 catalyzes the calcium-dependent hydrolysis of the 2-acyl groups in 3-sn-phosphoglycerides. In Tropidechis carinatus (Australian rough-scaled snake), this protein is Acidic phospholipase A2 5.